The following is a 275-amino-acid chain: Cell division protein FtsQ (275 aa).

The disordered stretch occupies residues 1–20; it reads MRDLHKKKPRPVTQNRLKKP. The Cytoplasmic portion of the chain corresponds to 1 to 38; it reads MRDLHKKKPRPVTQNRLKKPPKTCKPINYRGILKKTAK. Residues 39 to 61 form a helical membrane-spanning segment; the sequence is VVGGAALISAVGCAGYGIYRIIA. The Periplasmic portion of the chain corresponds to 62-275; it reads GTTFFKLERI…YSDKIIVKKV (214 aa). One can recognise a POTRA domain in the interval 66-134; the sequence is FKLERIEVSE…NTLSMQIAER (69 aa).

Belongs to the FtsQ/DivIB family. FtsQ subfamily.

The protein resides in the cell inner membrane. Essential cell division protein. The protein is Cell division protein FtsQ of Geotalea daltonii (strain DSM 22248 / JCM 15807 / FRC-32) (Geobacter daltonii).